Reading from the N-terminus, the 381-residue chain is UDP-4-amino-4-deoxy-L-arabinose--oxoglutarate aminotransferase (381 aa).

K182 carries the post-translational modification N6-(pyridoxal phosphate)lysine.

It belongs to the DegT/DnrJ/EryC1 family. ArnB subfamily. In terms of assembly, homodimer. It depends on pyridoxal 5'-phosphate as a cofactor.

It catalyses the reaction UDP-4-amino-4-deoxy-beta-L-arabinose + 2-oxoglutarate = UDP-beta-L-threo-pentopyranos-4-ulose + L-glutamate. It participates in nucleotide-sugar biosynthesis; UDP-4-deoxy-4-formamido-beta-L-arabinose biosynthesis; UDP-4-deoxy-4-formamido-beta-L-arabinose from UDP-alpha-D-glucuronate: step 2/3. It functions in the pathway bacterial outer membrane biogenesis; lipopolysaccharide biosynthesis. Catalyzes the conversion of UDP-4-keto-arabinose (UDP-Ara4O) to UDP-4-amino-4-deoxy-L-arabinose (UDP-L-Ara4N). The modified arabinose is attached to lipid A and is required for resistance to polymyxin and cationic antimicrobial peptides. This chain is UDP-4-amino-4-deoxy-L-arabinose--oxoglutarate aminotransferase, found in Edwardsiella ictaluri (strain 93-146).